A 216-amino-acid polypeptide reads, in one-letter code: Transmembrane emp24 domain-containing protein eca (216 aa).

An N-terminal signal peptide occupies residues 1 to 20 (MRDQILSLALLLCVLHSACG). Residues 21–182 (LYFHISETER…FRHTSESTNS (162 aa)) are Lumenal-facing. The 97-residue stretch at 30–126 (RKCFIEEVPD…QLRVHLDIQV (97 aa)) folds into the GOLD domain. Positions 134–164 (ANVAQKEKLTELQLRIRQLLDQVEQITKEQN) form a coiled coil. The chain crosses the membrane as a helical span at residues 183–203 (RVLWWSLAQTVVLVCMGFWQM). The Cytoplasmic segment spans residues 204 to 216 (RHLKSFFEAKKLV). The Prevents secretion from ER signature appears at 213–216 (KKLV).

The protein belongs to the EMP24/GP25L family.

It localises to the endoplasmic reticulum membrane. Eca and bai are essential, though not redundant, for dorsoventral patterning of the embryo. Specifically required during early embryogenesis for the activity of maternal tkv, while the zygotic tkv is not affected. Involved in Golgi organization. The sequence is that of Transmembrane emp24 domain-containing protein eca from Drosophila ananassae (Fruit fly).